The sequence spans 191 residues: Dephospho-CoA kinase (191 aa).

The DPCK domain maps to 3–191 (AIGITGSYAS…NLIANLECRV (189 aa)). An ATP-binding site is contributed by 11-16 (ASGKTF).

The protein belongs to the CoaE family.

The protein resides in the cytoplasm. It carries out the reaction 3'-dephospho-CoA + ATP = ADP + CoA + H(+). Its pathway is cofactor biosynthesis; coenzyme A biosynthesis; CoA from (R)-pantothenate: step 5/5. Catalyzes the phosphorylation of the 3'-hydroxyl group of dephosphocoenzyme A to form coenzyme A. The sequence is that of Dephospho-CoA kinase from Rickettsia bellii (strain RML369-C).